The sequence spans 169 residues: uncharacterized protein (169 aa).

This is an uncharacterized protein from Saccharomyces cerevisiae (strain ATCC 204508 / S288c) (Baker's yeast).